A 211-amino-acid polypeptide reads, in one-letter code: MRKLSFLDRVIEELDSYARFTKVPLNPSKKSPSSDTIDGKLFEIEKKHSAGLMRVDYTGEICAQGLYRGQASVAKSPQTKEHLYHAAAEEYDHLAWCGERLQELGARPSLLNPFWYWTSFGIGAVAGSISDSLSYGFVVETEKQVMKHIDSHLKSLPVNDNRSREILKQMYIDESEHAVEAEKAGGKKLPKTVKAIMKLQSKVMTTLAYRF.

Residues glutamate 60, glutamate 90, histidine 93, glutamate 142, glutamate 174, and histidine 177 each coordinate Fe cation.

Belongs to the COQ7 family. The cofactor is Fe cation.

The protein resides in the cell membrane. It carries out the reaction a 5-methoxy-2-methyl-3-(all-trans-polyprenyl)benzene-1,4-diol + AH2 + O2 = a 3-demethylubiquinol + A + H2O. It participates in cofactor biosynthesis; ubiquinone biosynthesis. Functionally, catalyzes the hydroxylation of 2-nonaprenyl-3-methyl-6-methoxy-1,4-benzoquinol during ubiquinone biosynthesis. This Francisella tularensis subsp. holarctica (strain FTNF002-00 / FTA) protein is 3-demethoxyubiquinol 3-hydroxylase.